Reading from the N-terminus, the 151-residue chain is Protein Turandot Z (151 aa).

The first 23 residues, 1–23 (MSRLIHLSFVLALLACLTGPISA), serve as a signal peptide directing secretion.

It belongs to the Turandot family.

The protein resides in the secreted. A humoral factor that may play a role in stress tolerance. This Drosophila pseudoobscura pseudoobscura (Fruit fly) protein is Protein Turandot Z.